The following is a 182-amino-acid chain: Putative pre-16S rRNA nuclease (182 aa).

The protein belongs to the YqgF nuclease family.

It localises to the cytoplasm. Functionally, could be a nuclease involved in processing of the 5'-end of pre-16S rRNA. This Corynebacterium glutamicum (strain ATCC 13032 / DSM 20300 / JCM 1318 / BCRC 11384 / CCUG 27702 / LMG 3730 / NBRC 12168 / NCIMB 10025 / NRRL B-2784 / 534) protein is Putative pre-16S rRNA nuclease.